Here is a 404-residue protein sequence, read N- to C-terminus: Argininosuccinate synthase (404 aa).

Residues alanine 11–serine 19 and alanine 38 contribute to the ATP site. Residues tyrosine 91 and serine 96 each contribute to the L-citrulline site. Position 121 (glycine 121) interacts with ATP. Threonine 123, asparagine 127, and aspartate 128 together coordinate L-aspartate. L-citrulline is bound at residue asparagine 127. L-citrulline-binding residues include arginine 131, serine 182, serine 191, glutamate 267, and tyrosine 279.

Belongs to the argininosuccinate synthase family. Type 1 subfamily. In terms of assembly, homotetramer.

Its subcellular location is the cytoplasm. It catalyses the reaction L-citrulline + L-aspartate + ATP = 2-(N(omega)-L-arginino)succinate + AMP + diphosphate + H(+). Its pathway is amino-acid biosynthesis; L-arginine biosynthesis; L-arginine from L-ornithine and carbamoyl phosphate: step 2/3. This is Argininosuccinate synthase from Paramagnetospirillum magneticum (strain ATCC 700264 / AMB-1) (Magnetospirillum magneticum).